A 366-amino-acid chain; its full sequence is Methylthioribose-1-phosphate isomerase (366 aa).

The active-site Proton donor is Asp-260.

The protein belongs to the eIF-2B alpha/beta/delta subunits family. MtnA subfamily.

The protein localises to the cytoplasm. The protein resides in the nucleus. The catalysed reaction is 5-(methylsulfanyl)-alpha-D-ribose 1-phosphate = 5-(methylsulfanyl)-D-ribulose 1-phosphate. The protein operates within amino-acid biosynthesis; L-methionine biosynthesis via salvage pathway; L-methionine from S-methyl-5-thio-alpha-D-ribose 1-phosphate: step 1/6. Its function is as follows. Catalyzes the interconversion of methylthioribose-1-phosphate (MTR-1-P) into methylthioribulose-1-phosphate (MTRu-1-P). This chain is Methylthioribose-1-phosphate isomerase, found in Caenorhabditis elegans.